The sequence spans 351 residues: Farnesyl pyrophosphate synthase (351 aa).

Residues Lys51, Arg54, and Gln92 each contribute to the isopentenyl diphosphate site. Residues Asp99 and Asp103 each contribute to the Mg(2+) site. Residue Arg108 coordinates dimethylallyl diphosphate. An isopentenyl diphosphate-binding site is contributed by Arg109. The dimethylallyl diphosphate site is built by Lys196, Thr197, Gln236, Lys253, and Lys262.

This sequence belongs to the FPP/GGPP synthase family. Mg(2+) is required as a cofactor.

The catalysed reaction is isopentenyl diphosphate + dimethylallyl diphosphate = (2E)-geranyl diphosphate + diphosphate. It catalyses the reaction isopentenyl diphosphate + (2E)-geranyl diphosphate = (2E,6E)-farnesyl diphosphate + diphosphate. The protein operates within isoprenoid biosynthesis; farnesyl diphosphate biosynthesis; farnesyl diphosphate from geranyl diphosphate and isopentenyl diphosphate: step 1/1. It functions in the pathway isoprenoid biosynthesis; geranyl diphosphate biosynthesis; geranyl diphosphate from dimethylallyl diphosphate and isopentenyl diphosphate: step 1/1. Farnesyl pyrophosphate synthase; part of the second module of ergosterol biosynthesis pathway that includes the middle steps of the pathway. ERG20 catalyzes the sequential condensation of isopentenyl pyrophosphate with dimethylallyl pyrophosphate, and then with the resultant geranylpyrophosphate to the ultimate product farnesyl pyrophosphate. The second module is carried out in the vacuole and involves the formation of farnesyl diphosphate, which is also an important intermediate in the biosynthesis of ubiquinone, dolichol, heme and prenylated proteins. Activity by the mevalonate kinase ERG12 first converts mevalonate into 5-phosphomevalonate. 5-phosphomevalonate is then further converted to 5-diphosphomevalonate by the phosphomevalonate kinase ERG8. The diphosphomevalonate decarboxylase MVD then produces isopentenyl diphosphate. The isopentenyl-diphosphate delta-isomerase IDI1 then catalyzes the 1,3-allylic rearrangement of the homoallylic substrate isopentenyl (IPP) to its highly electrophilic allylic isomer, dimethylallyl diphosphate (DMAPP). Finally the farnesyl diphosphate synthase ERG20 catalyzes the sequential condensation of isopentenyl pyrophosphate with dimethylallyl pyrophosphate, and then with the resultant geranylpyrophosphate to the ultimate product farnesyl pyrophosphate. This is Farnesyl pyrophosphate synthase from Candida albicans (strain SC5314 / ATCC MYA-2876) (Yeast).